The following is a 625-amino-acid chain: Ankyrin repeat domain-containing protein oryK (625 aa).

ANK repeat units follow at residues 1–27 (MDIY…DVDG), 31–60 (DGKT…GRGP), 62–89 (NPSL…NAER), 90–119 (EHRS…EYQD), 162–195 (FFDY…DVNC), 202–232 (QFET…DLTI), 500–530 (DTRC…NVNF), 534–562 (SDRT…DIDL), and 568–598 (EGRT…DFSI).

It participates in secondary metabolite biosynthesis. In terms of biological role, ankyrin repeat domain-containing protein; part of the gene cluster that mediates the biosynthesis of oryzines, natural products with an unusual maleidride backbone. The two subunits of the fungal fatty acid synthase oryfasA and oryfasB probably form octenoic acid. This fatty acid is most likely activated by the acyl-CoA ligase oryP to give octenyl-CoA before the citrate synthase-like protein oryE catalyzes condensation with oxaloacetate to form tricarboxylic acid. The next steps of the pathways are conjectural, but a favorite possible route has been proposed, beginning with decarboxylation and concomitant dehydration by the decarboxylase oryM, followed by tautomerization, which may lead to the production of a diene intermediate. Reduction of this diene intermediate could give the known metabolite piliformic acid. On the pathway to oryzine B and oryzine A, however, hydroxylation of the diene by the alpha-ketoglutarate-dependent dioxygenase oryG and lactonisation by the lactonohydrolases oryH or oryL could give oryzine B directly. Finally, enoyl reduction by the dehydrogenase oryD would then convert oryzine B into oryzine A. In Aspergillus oryzae (strain ATCC 42149 / RIB 40) (Yellow koji mold), this protein is Ankyrin repeat domain-containing protein oryK.